The following is a 618-amino-acid chain: Carotenoid cleavage dioxygenase 7, chloroplastic (618 aa).

The N-terminal 31 residues, 1–31 (MSLPIPPKFLPPLKSPPIHHHQTPPPLAPPR), are a transit peptide targeting the chloroplast. A disordered region spans residues 11–34 (PPLKSPPIHHHQTPPPLAPPRAAI). The Fe cation site is built by His-266, His-319, His-398, and His-612.

This sequence belongs to the carotenoid oxygenase family. Fe(2+) serves as cofactor. In terms of tissue distribution, expressed in flowers, siliques, inflorescence stems, petiole, leaves and roots.

It localises to the plastid. It is found in the chloroplast. It catalyses the reaction 9-cis-beta-carotene + O2 = 9-cis-10'-apo-beta-carotenal + beta-ionone. Involved in strigolactones biosynthesis by cleaving asymmetrically a variety of linear and cyclic carotenoids at the 9-10 double bond. Produces one C(13) beta-ionone and the C(27) 10'-apo-beta-carotenal. Strigolactones are hormones that inhibit tillering and shoot branching through the MAX-dependent pathway, contribute to the regulation of shoot architectural response to phosphate-limiting conditions and function as rhizosphere signal that stimulates hyphal branching of arbuscular mycorrhizal fungi and trigger seed germination of root parasitic weeds. No activity on lycopene, lutein, zeaxanthin, violaxanthin or neoxanthin. Probably not involved in abscisic acid biosynthesis. This is Carotenoid cleavage dioxygenase 7, chloroplastic (CCD7) from Arabidopsis thaliana (Mouse-ear cress).